A 1482-amino-acid chain; its full sequence is MRKDRLLHLCLVLLLILLSASDSNSTEPQYMVLVPSLLHTEAPKKGCVLLSHLNETVTVSASLESGRENRSLFTDLVAEKDLFHCVSFTLPRISASSEVAFLSIQIKGPTQDFRKRNTVLVLNTQSLVFVQTDKPMYKPGQTVRFRVVSVDENFRPRNELIPLIYLENPRRNRIAQWQSLKLEAGINQLSFPLSSEPIQGSYRVVVQTESGGRIQHPFTVEEFVLPKFEVKVQVPKIISIMDEKVNITVCGEYTYGKPVPGLATVSLCRKLSRVLNCDKQEVCEEFSQQLNSNGCITQQVHTKMLQITNTGFEMKLRVEARIREEGTDLEVTANRISEITNIVSKLKFVKVDSHFRQGIPFFAQVLLVDGKGVPIPNKLFFISVNDANYYSNATTNEQGLAQFSINTTSISVNKLFVRVFTVHPNLCFHYSWVAEDHQGAQHTANRVFSLSGSYIHLEPVAGTLPCGHTETITAHYTLNRQAMGELSELSFHYLIMAKGVIVRSGTHTLPVESGDMKGSFALSFPVESDVAPIARMFIFAILPDGEVVGDSEKFEIENCLANKVDLSFSPAQSPPASHAHLQVAAAPQSLCALRAVDQSVLLMKPEAELSVSSVYNLLTVKDLTNFPDNVDQQEEEQGHCPRPFFIHNGAIYVPLSSNEADIYSFLKGMGLKVFTNSKIRKPKSCSVIPSVSAGAVGQGYYGAGLGVVERPYVPQLGTYNVIPLNNEQSSGPVPETVRSYFPETWIWELVAVNSSGVAEVGVTVPDTITEWKAGAFCLSEDAGLGISSTASLRAFQPFFVELTMPYSVIRGEVFTLKATVLNYLPKCIRVSVQLKASPAFLASQNTKGEESYCICGNERQTLSWTVTPKTLGNVNFSVSAEAMQSLELCGNEVVEVPEIKRKDTVIKTLLVEAEGIEQEKTFSSMTCASGANVSEQLSLKLPSNVVKESARASFSVLGDILGSAMQNIQNLLQMPYGCGEQNMVLFAPNIYVLNYLNETQQLTQEIKAKAVGYLITGYQRQLNYKHQDGSYSTFGERYGRNQGNTWLTAFVLKTFAQARSYIFIDEAHITQSLTWLSQMQKDNGCFRSSGSLLNNAIKGGVEDEATLSAYVTIALLEIPLPVTNPIVRNALFCLESAWNVAKEGTHGSHVYTKALLAYAFSLLGKQNQNREILNSLDKEAVKEDNLVHWERPQRPKAPVGHLYQTQAPSAEVEMTSYVLLAYLTAQPAPTSGDLTSATNIVKWIMKQQNAQGGFSSTQDTVVALHALSRYGAATFTRTEKTAQVTVQDSQTFSTNFQVDNNNLLLLQQISLPELPGEYVITVTGERCVYLQTSMKYNILPEKEDSPFALKVQTVPQTCDGHKAHTSFQISLTISYTGNRPASNMVIVDVKMVSGFIPLKPTVKMLERSSSVSRTEVSNNHVLIYVEQVTNQTLSFSFMVLQDIPVGDLKPAIVKVYDYYETDESVVAEYIAPCSTDTEHGNV.

The first 25 residues, 1–25, serve as a signal peptide directing secretion; the sequence is MRKDRLLHLCLVLLLILLSASDSNS. N-linked (GlcNAc...) asparagine glycosylation is found at asparagine 54, asparagine 69, asparagine 246, asparagine 392, and asparagine 406. The bait region stretch occupies residues 685 to 735; it reads CSVIPSVSAGAVGQGYYGAGLGVVERPYVPQLGTYNVIPLNNEQSSGPVPE. 3 N-linked (GlcNAc...) asparagine glycosylation sites follow: asparagine 753, asparagine 875, and asparagine 932. Positions 978-981 form a cross-link, isoglutamyl cysteine thioester (Cys-Gln); it reads CGEQ. Asparagine 997 and asparagine 1430 each carry an N-linked (GlcNAc...) asparagine glycan.

Belongs to the protease inhibitor I39 (alpha-2-macroglobulin) family. As to quaternary structure, homotetramer, which consists of two pairs of disulfide-linked chains. As to expression, plasma. Prominent constituent of late-pregnancy sera.

Its subcellular location is the secreted. Functionally, is able to inhibit all four classes of proteinases by a unique 'trapping' mechanism. This protein has a peptide stretch, called the 'bait region' which contains specific cleavage sites for different proteinases. When a proteinase cleaves the bait region, a conformational change is induced in the protein which traps the proteinase. The entrapped enzyme remains active against low molecular weight substrates (activity against high molecular weight substrates is greatly reduced). Following cleavage in the bait region a thioester bond is hydrolyzed and mediates the covalent binding of the protein to the proteinase. This is Pregnancy zone protein (PZP) from Homo sapiens (Human).